The following is a 549-amino-acid chain: O-fucosyltransferase 29 (549 aa).

A helical; Signal-anchor for type II membrane protein membrane pass occupies residues 43–63 (TVMWTWVCGFMLFSLGVISLF). N-linked (GlcNAc...) asparagine glycosylation is present at N152. 292 to 294 (HLR) provides a ligand contact to substrate. Residues N359 and N527 are each glycosylated (N-linked (GlcNAc...) asparagine). The segment at 506-549 (PFSYDKTSTDDEEEDMSEENHNSTSPGHVHLSSADNERDEVFPD) is disordered. Over residues 540-549 (DNERDEVFPD) the composition is skewed to basic and acidic residues.

The protein belongs to the glycosyltransferase GT106 family.

Its subcellular location is the membrane. It participates in glycan metabolism. In Arabidopsis thaliana (Mouse-ear cress), this protein is O-fucosyltransferase 29.